The primary structure comprises 221 residues: Thiamine-phosphate synthase (221 aa).

4-amino-2-methyl-5-(diphosphooxymethyl)pyrimidine-binding positions include 49-53 (QFREK) and Asn-85. Asp-86 and Asp-105 together coordinate Mg(2+). 4-amino-2-methyl-5-(diphosphooxymethyl)pyrimidine is bound at residue Ser-124. 151–153 (TQS) provides a ligand contact to 2-[(2R,5Z)-2-carboxy-4-methylthiazol-5(2H)-ylidene]ethyl phosphate. 4-amino-2-methyl-5-(diphosphooxymethyl)pyrimidine is bound at residue Lys-154. Residues Gly-183 and 203–204 (IS) contribute to the 2-[(2R,5Z)-2-carboxy-4-methylthiazol-5(2H)-ylidene]ethyl phosphate site.

It belongs to the thiamine-phosphate synthase family. Mg(2+) is required as a cofactor.

The catalysed reaction is 2-[(2R,5Z)-2-carboxy-4-methylthiazol-5(2H)-ylidene]ethyl phosphate + 4-amino-2-methyl-5-(diphosphooxymethyl)pyrimidine + 2 H(+) = thiamine phosphate + CO2 + diphosphate. It catalyses the reaction 2-(2-carboxy-4-methylthiazol-5-yl)ethyl phosphate + 4-amino-2-methyl-5-(diphosphooxymethyl)pyrimidine + 2 H(+) = thiamine phosphate + CO2 + diphosphate. The enzyme catalyses 4-methyl-5-(2-phosphooxyethyl)-thiazole + 4-amino-2-methyl-5-(diphosphooxymethyl)pyrimidine + H(+) = thiamine phosphate + diphosphate. It functions in the pathway cofactor biosynthesis; thiamine diphosphate biosynthesis; thiamine phosphate from 4-amino-2-methyl-5-diphosphomethylpyrimidine and 4-methyl-5-(2-phosphoethyl)-thiazole: step 1/1. Its function is as follows. Condenses 4-methyl-5-(beta-hydroxyethyl)thiazole monophosphate (THZ-P) and 2-methyl-4-amino-5-hydroxymethyl pyrimidine pyrophosphate (HMP-PP) to form thiamine monophosphate (TMP). The sequence is that of Thiamine-phosphate synthase from Histophilus somni (strain 129Pt) (Haemophilus somnus).